The following is a 324-amino-acid chain: tRNA pseudouridine synthase B (324 aa).

D49 functions as the Nucleophile in the catalytic mechanism. The tract at residues 87–107 (RSTDDLEGQPTKTSDKRPSRE) is disordered.

It belongs to the pseudouridine synthase TruB family. Type 1 subfamily.

It catalyses the reaction uridine(55) in tRNA = pseudouridine(55) in tRNA. Functionally, responsible for synthesis of pseudouridine from uracil-55 in the psi GC loop of transfer RNAs. The protein is tRNA pseudouridine synthase B of Brucella abortus (strain 2308).